The following is a 243-amino-acid chain: Nuclear ubiquitous casein and cyclin-dependent kinase substrate 1 (243 aa).

Positions 1-243 are disordered; that stretch reads MSRPVRNRKV…SEDEAASGED (243 aa). Residue Tyr13 is modified to Phosphotyrosine. Phosphoserine is present on residues Ser14 and Ser19. Position 26 is a phosphotyrosine (Tyr26). Residues 35-51 show a composition bias toward basic residues; it reads KKIRSSPREAKNKRRSG. Phosphoserine is present on residues Ser54, Ser58, Ser61, Ser73, Ser75, and Ser79. Residues 64 to 77 are compositionally biased toward basic and acidic residues; that stretch reads KDVKTKKDDSHSAE. The span at 91–100 shows a compositional bias: low complexity; that stretch reads QQRQAASKAA. A compositionally biased stretch (acidic residues) spans 111 to 124; that stretch reads VGSEEEPEEDDEAP. A phosphoserine mark is found at Ser113, Ser130, Ser132, and Ser144. The segment covering 132-145 has biased composition (acidic residues); the sequence is SDEDFLMEDDDDSD. Residues 149–174 are compositionally biased toward basic residues; the sequence is SKKKNKKMVKKSKPERKEKKMPKPRL. Thr179 bears the Phosphothreonine mark. Ser181 is modified (phosphoserine). Over residues 197 to 206 the composition is skewed to basic and acidic residues; sequence TSKEKTPSPK. A Phosphothreonine modification is found at Thr202. Phosphoserine is present on residues Ser204, Ser214, Ser223, Ser229, Ser234, and Ser240. Residues 232–243 are compositionally biased toward acidic residues; the sequence is EGSEDEAASGED.

As to quaternary structure, does not interact with RAD51. Phosphorylated in an ATM-dependent manner in response to DNA damage. Phosphorylated by CDK1 and casein kinase.

The protein localises to the nucleus. The protein resides in the chromosome. In terms of biological role, chromatin-associated protein involved in DNA repair by promoting homologous recombination (HR). Binds double-stranded DNA (dsDNA) and secondary DNA structures, such as D-loop structures, but with less affinity than RAD51AP1. This Rattus norvegicus (Rat) protein is Nuclear ubiquitous casein and cyclin-dependent kinase substrate 1.